Reading from the N-terminus, the 368-residue chain is E3 ubiquitin-protein ligase E3D (368 aa).

Residue alanine 2 is modified to N-acetylalanine. Residues 129 to 159 (PLPSENWSALVGEWCCHPDPFANRPLHPREN) carry the BRAT1-like motif motif. Cysteine 144 contacts Zn(2+). The tract at residues 214–236 (RPSEGSFPNIPRSQFLQSIIAQC) is interaction with UBE2C. Residues 332–368 (LPSATCLELLLILSRNNASLPLSLRQMNSFQVAFLKM) are HECT-like.

Interacts with UBE2C/UbcH10 (E2 ubiquitin-conjugating enzyme). In vitro, interacts with cyclin-B. Ubiquitinated by UBCH10 (E2 ubiquitin-conjugating enzyme).

The protein localises to the cytoplasm. The catalysed reaction is S-ubiquitinyl-[E2 ubiquitin-conjugating enzyme]-L-cysteine + [acceptor protein]-L-lysine = [E2 ubiquitin-conjugating enzyme]-L-cysteine + N(6)-ubiquitinyl-[acceptor protein]-L-lysine.. The protein operates within protein modification; protein ubiquitination. Its function is as follows. E3 ubiquitin-protein ligase which accepts ubiquitin from specific E2 ubiquitin-conjugating enzymes, and transfers it to substrates, generally promoting their degradation by the proteasome. Independently of its E3 ubiquitin-protein ligase activity, acts as an inhibitor of CPSF3 endonuclease activity by blocking CPSF3 active site. The protein is E3 ubiquitin-protein ligase E3D (Ube3d) of Mus musculus (Mouse).